A 94-amino-acid polypeptide reads, in one-letter code: Acylphosphatase (94 aa).

The 87-residue stretch at 8–94 (RLTAWVHGRV…REQITGFHER (87 aa)) folds into the Acylphosphatase-like domain. Catalysis depends on residues Arg23 and Asn41.

Belongs to the acylphosphatase family.

The enzyme catalyses an acyl phosphate + H2O = a carboxylate + phosphate + H(+). This chain is Acylphosphatase (acyP), found in Mycobacterium sp. (strain JLS).